A 72-amino-acid polypeptide reads, in one-letter code: Small ribosomal subunit protein bS20 (72 aa).

The protein belongs to the bacterial ribosomal protein bS20 family.

Functionally, binds directly to 16S ribosomal RNA. In Aeromonas hydrophila, this protein is Small ribosomal subunit protein bS20 (rpsT).